An 83-amino-acid chain; its full sequence is Omega-agatoxin-Aa4b (83 aa).

A signal peptide spans 1–20 (MKLCMTLLITAIAVVTFVVA). Residues 21–35 (TQEESAEFNEVEESR) constitute a propeptide that is removed on maturation. Cystine bridges form between Cys-39–Cys-55, Cys-47–Cys-60, Cys-54–Cys-71, and Cys-62–Cys-69. The residue at position 81 (Ser-81) is a D-serine (Ser).

It belongs to the neurotoxin 02 (plectoxin) family. 03 (omega-agtx) subfamily. Post-translationally, the toxin with D-Ser (named omega-aga IVC) is 80-90 fold more potent than that with L-Ser (omega-aga IVB) against Cav2.1/CACNA1A (P-type) channels in rat cerebellar Purkinje neurons and is more resistant to proteases. The epimerization is done by the venom peptide isomerase heterodimer. In terms of tissue distribution, expressed by the venom gland.

It is found in the secreted. Its function is as follows. Antagonist of voltage-gated Cav2.1/CACNA1A (P-type) calcium channels. Paralyzes insect by blocking neuromuscular transmission. This Agelenopsis aperta (North American funnel-web spider) protein is Omega-agatoxin-Aa4b.